The following is a 458-amino-acid chain: UDP-N-acetylmuramate--L-alanine ligase (458 aa).

ATP is bound at residue 112 to 118 (GMHGKTT).

It belongs to the MurCDEF family.

The protein resides in the cytoplasm. It catalyses the reaction UDP-N-acetyl-alpha-D-muramate + L-alanine + ATP = UDP-N-acetyl-alpha-D-muramoyl-L-alanine + ADP + phosphate + H(+). The protein operates within cell wall biogenesis; peptidoglycan biosynthesis. Functionally, cell wall formation. The protein is UDP-N-acetylmuramate--L-alanine ligase of Acidobacterium capsulatum (strain ATCC 51196 / DSM 11244 / BCRC 80197 / JCM 7670 / NBRC 15755 / NCIMB 13165 / 161).